The primary structure comprises 224 residues: Response regulator protein GraR (224 aa).

The Response regulatory domain maps to 2–115; sequence QILLVEDDNT…VLIAKLQAIY (114 aa). Aspartate 51 is subject to 4-aspartylphosphate. The ompR/PhoB-type DNA-binding region spans 126–224; that stretch reads KRTLTWQDAV…KVGKGYMAHE (99 aa). Phosphothreonine occurs at positions 128, 130, and 149.

In terms of assembly, interacts with GraX. In terms of processing, phosphorylated by GraS. Phosphorylated by Stk1; phosphorylation increases the DNA-binding activity of GraR.

Its subcellular location is the cytoplasm. In terms of biological role, member of the two-component regulatory system GraR/GraS involved in resistance against cationic antimicrobial peptides (CAMPs). Upon phosphorylation by GraS, functions as a transcription regulator by direct binding to promoter regions of target genes such as adhesins, exoproteins, transporters, toxins, and proteins involved in cell wall synthesis. Down-regulates the expression of many genes involved in RNA and amino acid synthesis or glycolysis. The chain is Response regulator protein GraR (graR) from Staphylococcus aureus (strain Mu50 / ATCC 700699).